We begin with the raw amino-acid sequence, 446 residues long: Phosphoglucosamine mutase (446 aa).

Catalysis depends on Ser-101, which acts as the Phosphoserine intermediate. Mg(2+)-binding residues include Ser-101, Asp-240, Asp-242, and Asp-244. The residue at position 101 (Ser-101) is a Phosphoserine.

This sequence belongs to the phosphohexose mutase family. It depends on Mg(2+) as a cofactor. In terms of processing, activated by phosphorylation.

It carries out the reaction alpha-D-glucosamine 1-phosphate = D-glucosamine 6-phosphate. Functionally, catalyzes the conversion of glucosamine-6-phosphate to glucosamine-1-phosphate. The polypeptide is Phosphoglucosamine mutase (Pseudomonas putida (strain ATCC 47054 / DSM 6125 / CFBP 8728 / NCIMB 11950 / KT2440)).